The following is a 927-amino-acid chain: Sodium/calcium exchanger 3 (927 aa).

The N-terminal stretch at 1–30 is a signal peptide; that stretch reads MAWLRLQPLTSAFLHFGLVTFVLFLNGLRA. The Extracellular portion of the chain corresponds to 31–73; that stretch reads EAGDLRDVPSAGQNNESCSGSSDCKEGVILPIWYPENPSLGDK. The N-linked (GlcNAc...) asparagine glycan is linked to N45. The chain crosses the membrane as a helical span at residues 74 to 94; it reads IARVIVYFVALIYMFLGVSII. Topologically, residues 95 to 147 are cytoplasmic; it reads ADRFMASIEVITSQEREVTIKKPNGETSTTTIRVWNETVSNLTLMALGSSAPE. Residues 140 to 180 form an Alpha-1 repeat; that stretch reads ALGSSAPEILLSLIEVCGHGFIAGDLGPSTIVGSAAFNMFI. A helical membrane pass occupies residues 148 to 168; sequence ILLSLIEVCGHGFIAGDLGPS. Residue T169 is a topological domain, extracellular. A helical transmembrane segment spans residues 170–190; the sequence is IVGSAAFNMFIIIGICVYVIP. Topologically, residues 191–202 are cytoplasmic; that stretch reads DGETRKIKHLRV. A helical transmembrane segment spans residues 203–223; that stretch reads FFVTAAWSVFAYIWLYMILAV. The Extracellular portion of the chain corresponds to 224–230; the sequence is FSPGVVQ. Residues 231 to 251 form a helical membrane-spanning segment; it reads VWEGLLTLFFFPVCVLLAWVA. Residues 252 to 726 are Cytoplasmic-facing; it reads DKRLLFYKYM…DESGEERLPS (475 aa). Residues 253-272 form a putative calmodulin-binding region region; the sequence is KRLLFYKYMHKRYRTDKHRG. Calx-beta domains lie at 386–485 and 519–619; these read VHTD…VRLS and ATVT…IALG. The Ca(2+) site is built by E409, D445, D470, D471, I473, E475, E478, D525, D526, D527, E543, D579, E606, E607, and E672. Residues 727-747 form a helical membrane-spanning segment; sequence CFDYVMHFLTVFWKVLFACVP. Over 748–754 the chain is Extracellular; it reads PTEYCHG. The chain crosses the membrane as a helical span at residues 755-775; the sequence is WACFVVSILIIGMLTAIIGDL. The Cytoplasmic segment spans residues 776–778; that stretch reads ASH. Residues 779 to 799 form a helical membrane-spanning segment; that stretch reads FGCTIGLKDSVTAVVFVAFGT. Residues 796–832 form an Alpha-2 repeat; the sequence is AFGTSVPDTFASKAAALQDVYADASIGNVTGSNAVNV. At 800–828 the chain is on the extracellular side; that stretch reads SVPDTFASKAAALQDVYADASIGNVTGSN. Residue N823 is glycosylated (N-linked (GlcNAc...) asparagine). A helical membrane pass occupies residues 829–849; it reads AVNVFLGIGLAWSVAAIYWAM. The Cytoplasmic portion of the chain corresponds to 850–860; it reads QGQEFHVSAGT. Residues 861 to 881 form a helical membrane-spanning segment; that stretch reads LAFSVTLFTIFAFVCLSVLLY. Residues 882 to 903 lie on the Extracellular side of the membrane; the sequence is RRRPHLGGELGGPRGCKLATTW. Residues 904 to 924 traverse the membrane as a helical segment; the sequence is LFVSLWLLYVLFATLEAYCYI. At 925-927 the chain is on the cytoplasmic side; sequence KGF.

Belongs to the Ca(2+):cation antiporter (CaCA) (TC 2.A.19) family. SLC8 subfamily. Interacts with AKAP1. In terms of tissue distribution, detected in neurons in brain cortex and hippocampus. Detected in pyramidal cell bodies and processes, in granule cells and interneurons in the CA1 and CA3 region of the hippocampus. Detected on astrocyte processes in brain cortex. Detected on endothelial cells in hippocampus capillaries (at protein level). Restricted to brain and skeletal muscle.

It is found in the cell membrane. Its subcellular location is the perikaryon. It localises to the cell projection. The protein resides in the dendrite. The protein localises to the dendritic spine. It is found in the sarcolemma. Its subcellular location is the cytoplasm. It localises to the sarcoplasm. The protein resides in the cell junction. The protein localises to the mitochondrion outer membrane. It is found in the endoplasmic reticulum membrane. Its subcellular location is the perinuclear region. It carries out the reaction Ca(2+)(in) + 3 Na(+)(out) = Ca(2+)(out) + 3 Na(+)(in). Its activity is regulated as follows. Calcium transport is down-regulated by Na(+) and stimulated by Ca(2+). Functionally, mediates the electrogenic exchange of Ca(2+) against Na(+) ions across the cell membrane, and thereby contributes to the regulation of cytoplasmic Ca(2+) levels and Ca(2+)-dependent cellular processes. Contributes to cellular Ca(2+) homeostasis in excitable cells, both in muscle and in brain. In a first phase, voltage-gated channels mediate the rapid increase of cytoplasmic Ca(2+) levels due to release of Ca(2+) stores from the endoplasmic reticulum. SLC8A3 mediates the export of Ca(2+) from the cell during the next phase, so that cytoplasmic Ca(2+) levels rapidly return to baseline. Contributes to Ca(2+) transport during excitation-contraction coupling in muscle. In neurons, contributes to the rapid decrease of cytoplasmic Ca(2+) levels back to baseline after neuronal activation, and thereby contributes to modulate synaptic plasticity, learning and memory. Required for normal oligodendrocyte differentiation and for normal myelination. Mediates Ca(2+) efflux from mitochondria and contributes to mitochondrial Ca(2+) ion homeostasis. In Rattus norvegicus (Rat), this protein is Sodium/calcium exchanger 3 (Slc8a3).